The primary structure comprises 191 residues: Insulin-like peptide INSL6 (191 aa).

The N-terminal stretch at 1–22 (MKQLCCSCLLWLGLLLTPFSRE) is a signal peptide. 3 cysteine pairs are disulfide-bonded: C33–C172, C45–C185, and C171–C176. Positions 53 to 161 (FEMEEQSPMT…RSLFWGNHSQ (109 aa)) are cleaved as a propeptide — connecting peptide.

It belongs to the insulin family.

It localises to the secreted. Functionally, may have a role in sperm development and fertilization. The polypeptide is Insulin-like peptide INSL6 (Insl6) (Mus musculus (Mouse)).